The sequence spans 290 residues: 4-hydroxy-tetrahydrodipicolinate synthase (290 aa).

Residue Thr-44 participates in pyruvate binding. Tyr-132 functions as the Proton donor/acceptor in the catalytic mechanism. The active-site Schiff-base intermediate with substrate is the Lys-160. Residue Ile-202 participates in pyruvate binding.

The protein belongs to the DapA family. Homotetramer; dimer of dimers.

It localises to the cytoplasm. The enzyme catalyses L-aspartate 4-semialdehyde + pyruvate = (2S,4S)-4-hydroxy-2,3,4,5-tetrahydrodipicolinate + H2O + H(+). It functions in the pathway amino-acid biosynthesis; L-lysine biosynthesis via DAP pathway; (S)-tetrahydrodipicolinate from L-aspartate: step 3/4. Functionally, catalyzes the condensation of (S)-aspartate-beta-semialdehyde [(S)-ASA] and pyruvate to 4-hydroxy-tetrahydrodipicolinate (HTPA). The sequence is that of 4-hydroxy-tetrahydrodipicolinate synthase from Geobacter sp. (strain M21).